The sequence spans 64 residues: Putative antitoxin MJ0975 (64 aa).

This sequence belongs to the UPF0165 family.

Its function is as follows. Possibly the antitoxin component of a type II toxin-antitoxin (TA) system. Its cognate toxin is VapC2 (Potential). In Methanocaldococcus jannaschii (strain ATCC 43067 / DSM 2661 / JAL-1 / JCM 10045 / NBRC 100440) (Methanococcus jannaschii), this protein is Putative antitoxin MJ0975 (vapB2).